The chain runs to 1358 residues: DNA-directed RNA polymerase subunit beta (1358 aa).

This sequence belongs to the RNA polymerase beta chain family. In terms of assembly, the RNAP catalytic core consists of 2 alpha, 1 beta, 1 beta' and 1 omega subunit. When a sigma factor is associated with the core the holoenzyme is formed, which can initiate transcription.

The catalysed reaction is RNA(n) + a ribonucleoside 5'-triphosphate = RNA(n+1) + diphosphate. DNA-dependent RNA polymerase catalyzes the transcription of DNA into RNA using the four ribonucleoside triphosphates as substrates. This is DNA-directed RNA polymerase subunit beta from Francisella tularensis subsp. novicida (strain U112).